The sequence spans 328 residues: Palmitoyltransferase ZDHHC15A (328 aa).

Residues 1–14 (MLLPACLRRCARLL) lie on the Cytoplasmic side of the membrane. The chain crosses the membrane as a helical span at residues 15 to 35 (FWIPVLVVIVVVMWSYYAYVV). Residues 36–48 (HFCWILLSSATQR) are Lumenal-facing. The chain crosses the membrane as a helical span at residues 49–69 (VVFLCLFHLCFGMFSWSFWKA). The Cytoplasmic segment spans residues 70-166 (VSTPPSSPSV…NNCMGFSNYK (97 aa)). A DHHC domain is found at 123–173 (RFCHHCQLIKPDRCHHCSVCQTCVLKMDHHCLWLNNCMGFSNYKFFMLFLL). The Zn(2+) site is built by C125 and C128. Residue K132 coordinates substrate. Zn(2+)-binding residues include H138, C139, C142, C145, and H152. C153 serves as the catalytic S-palmitoyl cysteine intermediate. C159 contributes to the Zn(2+) binding site. Residues 167-187 (FFMLFLLYSLLYCLLIVSTVT) traverse the membrane as a helical segment. The Lumenal portion of the chain corresponds to 188 to 206 (PTVIQLWRGRLFDSCVKLH). Residues 207–227 (VLFLTLVSAIFAITLCFLLIF) traverse the membrane as a helical segment. The Cytoplasmic portion of the chain corresponds to 228-328 (HIWLLTSNKT…KEAAVTIAVD (101 aa)).

Belongs to the DHHC palmitoyltransferase family. In terms of processing, autopalmitoylated (in vitro).

Its subcellular location is the golgi apparatus membrane. It localises to the postsynaptic density. It catalyses the reaction L-cysteinyl-[protein] + hexadecanoyl-CoA = S-hexadecanoyl-L-cysteinyl-[protein] + CoA. It carries out the reaction L-cysteinyl-[protein] + tetradecanoyl-CoA = S-tetradecanoyl-L-cysteinyl-[protein] + CoA. The catalysed reaction is L-cysteinyl-[protein] + octadecanoyl-CoA = S-octadecanoyl-L-cysteinyl-[protein] + CoA. Its function is as follows. Palmitoyltransferase that catalyzes the addition of palmitate onto various protein substrates. Has no stringent fatty acid selectivity and in addition to palmitate can also transfer onto target proteins myristate from tetradecanoyl-CoA and stearate from octadecanoyl-CoA. May thereby regulate target proteins association and localization to membranes. This is Palmitoyltransferase ZDHHC15A (zdhhc15a) from Danio rerio (Zebrafish).